A 57-amino-acid polypeptide reads, in one-letter code: UPF0391 membrane protein AZOSEA39630 (57 aa).

2 helical membrane-spanning segments follow: residues 4 to 24 (WAIIFFVISVIAGLLGFTGVA) and 37 to 57 (IALAIFLIVLVFGVLLGVLVF).

The protein belongs to the UPF0391 family.

The protein localises to the cell membrane. This is UPF0391 membrane protein AZOSEA39630 from Aromatoleum aromaticum (strain DSM 19018 / LMG 30748 / EbN1) (Azoarcus sp. (strain EbN1)).